A 329-amino-acid chain; its full sequence is Acetyl-coenzyme A carboxylase carboxyl transferase subunit alpha (329 aa).

The 255-residue stretch at 40–294 (QLETLAARRR…REAIERHLDD (255 aa)) folds into the CoA carboxyltransferase C-terminal domain.

This sequence belongs to the AccA family. As to quaternary structure, acetyl-CoA carboxylase is a heterohexamer composed of biotin carboxyl carrier protein (AccB), biotin carboxylase (AccC) and two subunits each of ACCase subunit alpha (AccA) and ACCase subunit beta (AccD).

The protein localises to the cytoplasm. The catalysed reaction is N(6)-carboxybiotinyl-L-lysyl-[protein] + acetyl-CoA = N(6)-biotinyl-L-lysyl-[protein] + malonyl-CoA. The protein operates within lipid metabolism; malonyl-CoA biosynthesis; malonyl-CoA from acetyl-CoA: step 1/1. Its function is as follows. Component of the acetyl coenzyme A carboxylase (ACC) complex. First, biotin carboxylase catalyzes the carboxylation of biotin on its carrier protein (BCCP) and then the CO(2) group is transferred by the carboxyltransferase to acetyl-CoA to form malonyl-CoA. The chain is Acetyl-coenzyme A carboxylase carboxyl transferase subunit alpha from Prochlorococcus marinus (strain MIT 9303).